Here is a 422-residue protein sequence, read N- to C-terminus: Lipase member M (422 aa).

A signal peptide spans 1-33; the sequence is MSEILSRVWTVSHRVEIWLLILVAYLLQRNVNS. Residue asparagine 48 is glycosylated (N-linked (GlcNAc...) asparagine). Positions 92–392 constitute an AB hydrolase-1 domain; that stretch reads PVVLLQHGLL…EWAHVDFIWG (301 aa). Serine 186 serves as the catalytic Nucleophile. A disulfide bridge links cysteine 260 with cysteine 269. Active-site charge relay system residues include aspartate 357 and histidine 386.

The protein belongs to the AB hydrolase superfamily. Lipase family.

Its subcellular location is the secreted. Its function is as follows. Plays a highly specific role in the last step of keratinocyte differentiation. May have an essential function in lipid metabolism of the most differentiated epidermal layers. This Mus musculus (Mouse) protein is Lipase member M (Lipm).